An 852-amino-acid polypeptide reads, in one-letter code: Alanine--tRNA ligase (852 aa).

Zn(2+) contacts are provided by histidine 554, histidine 558, cysteine 656, and histidine 660.

It belongs to the class-II aminoacyl-tRNA synthetase family. Zn(2+) serves as cofactor.

The protein resides in the cytoplasm. It carries out the reaction tRNA(Ala) + L-alanine + ATP = L-alanyl-tRNA(Ala) + AMP + diphosphate. Catalyzes the attachment of alanine to tRNA(Ala) in a two-step reaction: alanine is first activated by ATP to form Ala-AMP and then transferred to the acceptor end of tRNA(Ala). Also edits incorrectly charged Ser-tRNA(Ala) and Gly-tRNA(Ala) via its editing domain. The protein is Alanine--tRNA ligase of Campylobacter curvus (strain 525.92).